Consider the following 366-residue polypeptide: Chorismate synthase (366 aa).

NADP(+) contacts are provided by R48 and R54. Residues 125-127 (RSS), 238-239 (NA), G278, 293-297 (KPTSS), and R319 each bind FMN.

Belongs to the chorismate synthase family. Homotetramer. Requires FMNH2 as cofactor.

The enzyme catalyses 5-O-(1-carboxyvinyl)-3-phosphoshikimate = chorismate + phosphate. The protein operates within metabolic intermediate biosynthesis; chorismate biosynthesis; chorismate from D-erythrose 4-phosphate and phosphoenolpyruvate: step 7/7. In terms of biological role, catalyzes the anti-1,4-elimination of the C-3 phosphate and the C-6 proR hydrogen from 5-enolpyruvylshikimate-3-phosphate (EPSP) to yield chorismate, which is the branch point compound that serves as the starting substrate for the three terminal pathways of aromatic amino acid biosynthesis. This reaction introduces a second double bond into the aromatic ring system. This is Chorismate synthase from Ralstonia nicotianae (strain ATCC BAA-1114 / GMI1000) (Ralstonia solanacearum).